Consider the following 515-residue polypeptide: MLLSQNAFIFRSLNLVLMVYISLVFGISYDSPDYTDESCTFKISLRNFRSILSWELKNHSIVPTHYTLLYTIMSKPEDLKVVKNCANTTRSFCDLTDEWRSTHEAYVTVLEGFSGNTTLFSCSHNFWLAIDMSFEPPEFEIVGFTNHINVMVKFPSIVEEELQFDLSLVIEEQSEGIVKKHKPEIKGNMSGNFTYIIDKLIPNTNYCVSVYLEHSDEQAVIKSPLKCTLLPPGQESESAESAKIGGIITVFLIALVLTSTIVTLKWIGYICLRNSLPKVLNFHNFLAWPFPNLPPLEAMDMVEVIYINRKKKVWDYNYDDESDSDTEAAPRTSGGGYTMHGLTVRPLGQASATSTESQLIDPESEEEPDLPEVDVELPTMPKDSPQQLELLSGPCERRKSPLQDPFPEEDYSSTEGSGGRITFNVDLNSVFLRVLDDEDSDDLEAPLMLSSHLEEMVDPEDPDNVQSNHLLASGEGTQPTFPSPSSEGLWSEDAPSDQSDTSESDVDLGDGYIMR.

An N-terminal signal peptide occupies residues 1-26; it reads MLLSQNAFIFRSLNLVLMVYISLVFG. Over 27–243 the chain is Extracellular; it reads ISYDSPDYTD…QESESAESAK (217 aa). Cystine bridges form between C39-C122 and C85-C93. N-linked (GlcNAc...) asparagine glycans are attached at residues N58, N87, N116, N188, and N192. A disulfide bridge connects residues C207 and C227. The chain crosses the membrane as a helical span at residues 244 to 264; that stretch reads IGGIITVFLIALVLTSTIVTL. The Cytoplasmic portion of the chain corresponds to 265 to 515; the sequence is KWIGYICLRN…VDLGDGYIMR (251 aa). 2 disordered regions span residues 318–418 and 455–515; these read YDDE…EGSG and EMVD…YIMR. A Phosphotyrosine modification is found at Y337. Residues 362 to 375 are compositionally biased toward acidic residues; sequence PESEEEPDLPEVDV. At S400 the chain carries Phosphoserine. Positions 418 to 444 are mediates interaction with STAT2 (and required for the recruitment of USP18); it reads GGRITFNVDLNSVFLRVLDDEDSDDLE. Positions 464 to 488 are enriched in polar residues; that stretch reads NVQSNHLLASGEGTQPTFPSPSSEG. At S467 the chain carries Phosphoserine. At Y512 the chain carries Phosphotyrosine.

This sequence belongs to the type II cytokine receptor family. In terms of assembly, heterodimer with IFNAR1; forming the receptor for type I interferon. Interacts with JAK1. Interacts with the transcriptional factors STAT1 and STAT2. Interacts with USP18; indirectly via STAT2, it negatively regulates the assembly of the ternary interferon-IFNAR1-IFNAR2 complex and therefore type I interferon signaling. Post-translationally, phosphorylated on tyrosine residues upon interferon binding. Phosphorylation at Tyr-337 or Tyr-512 are sufficient to mediate interferon dependent activation of STAT1, STAT2 and STAT3 leading to antiproliferative effects on many different cell types. In terms of processing, glycosylated. In terms of tissue distribution, isoform 3 is detected in the urine (at protein level). Expressed in blood cells. Expressed in lymphoblastoid and fibrosarcoma cell lines.

It is found in the cell membrane. The protein localises to the secreted. Functionally, together with IFNAR1, forms the heterodimeric receptor for type I interferons (including interferons alpha, beta, epsilon, omega and kappa). Type I interferon binding activates the JAK-STAT signaling cascade, resulting in transcriptional activation or repression of interferon-regulated genes that encode the effectors of the interferon response. Mechanistically, type I interferon-binding brings the IFNAR1 and IFNAR2 subunits into close proximity with one another, driving their associated Janus kinases (JAKs) (TYK2 bound to IFNAR1 and JAK1 bound to IFNAR2) to cross-phosphorylate one another. The activated kinases phosphorylate specific tyrosine residues on the intracellular domains of IFNAR1 and IFNAR2, forming docking sites for the STAT transcription factors (STAT1, STAT2 and STAT). STAT proteins are then phosphorylated by the JAKs, promoting their translocation into the nucleus to regulate expression of interferon-regulated genes. Potent inhibitor of type I IFN receptor activity. In Homo sapiens (Human), this protein is Interferon alpha/beta receptor 2 (IFNAR2).